We begin with the raw amino-acid sequence, 435 residues long: FAD-dependent monooxygenase ATEG_07662 (435 aa).

The chain crosses the membrane as a helical span at residues 8-28 (PLDVAIIGGGIIGIMTALGLL). The FAD site is built by Glu-38, Ala-51, and Arg-119. Asn-191 carries N-linked (GlcNAc...) asparagine glycosylation. The active site involves Arg-201. Residues Asp-317 and Ala-330 each contribute to the FAD site.

Belongs to the paxM FAD-dependent monooxygenase family. Requires FAD as cofactor.

The protein localises to the membrane. The protein operates within secondary metabolite biosynthesis. FAD-dependent monooxygenase; part of the cluster B that mediates the biosynthesis of azasperpyranones, members of the azaphilone family that exhibit anti-cancer activities. Azasperpyranones are synthesized by 2 clusters, A and B. Cluster A is responsible for the production of the polyhydric phenol moiety while the azaphilonoid scaffold is produced by the cluster B. The non-reducing polyketide synthase ATEG_03629 produces 5-methyl orsellinic acid, which is then reduced to 5-methyl orsellinic aldehyde by the NRPS-like protein ATEG_03630. 5-methyl orsellinic aldehyde is then first hydroxylated by the FAD-dependent monooxygenase ATEG_03635 and subsequently hydroxylated by the cytochrome P450 monooxygenase ATEG_03631 to produce the unstable polyhydric phenol precursor of azasperpyranones. On the other hand, the polyketide synthase ATEG_07659 is responsible for producing the 3,5-dimethyloctadienone moiety from acetyl-CoA, three malonyl-CoA, and two S-adenosyl methionines (SAM). The 3,5-dimethyloctadienone moiety is then loaded onto the SAT domain of ATEG_07661 and extended with four malonyl-CoA and one SAM, which leads to the formation of 2,4-dihydroxy-6-(5,7-dimethyl-2-oxo-trans-3-trans-5-nonadienyl)-3-methylbenzaldehyde (compound 8) after reductive release and aldol condensation. The FAD-dependent monooxygenase ATEG_07662 is the next enzyme in the biosynthesis sequence and hydroxylates the side chain at the benzylic position of compound 8. In Aspergillus nidulans, afoF, the ortholog of the FAD-dependent oxygenase ATEG_07660, is the key enzyme for the biosynthesis of asperfuranone by catalyzing the hydroxylation at C-8 of to prevent the formation of a six-membered ring hemiacetal intermediate and thus facilitating the formation of a five-membered ring to produce asperfuranone. In Aspergillus terreus, ATEG_07660 is probably not functional, which leads to the formation of the six-membered ring hemiacetal intermediate presperpyranone instead of asperfuranone. Finally, ATEG_03636 is involved in the condensation of the polyhydric phenol moiety produced by cluster A and the perasperpyranone precursor produced by cluster B, to yield azasperpyranone A. Further modifications of azasperpyranone A result in the production of derivatives, including azasperpyranone B to F. The sequence is that of FAD-dependent monooxygenase ATEG_07662 from Aspergillus terreus (strain NIH 2624 / FGSC A1156).